The primary structure comprises 214 residues: Variable small protein 24 (214 aa).

The first 18 residues, 1–18 (MRKRISAIIMTLFMVFMS), serve as a signal peptide directing secretion. A lipid anchor (N-palmitoyl cysteine) is attached at Cys19. Cys19 carries the S-diacylglycerol cysteine lipid modification. Residues 146–172 (TELGKKDASDDDTKKAIKKDNSDKTKG) are disordered.

This sequence belongs to the variable small protein (Vsp) family.

The protein localises to the cell outer membrane. In terms of biological role, the Vlp and Vsp proteins are antigenically distinct proteins, only one vlp or vsp gene is transcriptionally active at any one time. Switching between these genes is a mechanism of host immune response evasion. This chain is Variable small protein 24, found in Borrelia hermsii.